The sequence spans 163 residues: MMNKITHYFKSLLLLELLGGLWLTLKYTFKPKYTVLYPMEKFPQSPRFRGLHALRRYPNGEERCIACKLCEAVCPALAITIDSAKREDGTRRTTRYDIDLFKCIFCGFCEESCPVDSIVETHILEYHFEKRGENIINKPQLLAIGDRLETEIAERRAADAAFR.

2 4Fe-4S ferredoxin-type domains span residues 54–84 (LRRY…IDSA) and 94–123 (TRYD…ETHI). Residues Cys64, Cys67, Cys70, Cys74, Cys103, Cys106, Cys109, and Cys113 each coordinate [4Fe-4S] cluster.

This sequence belongs to the complex I 23 kDa subunit family. NDH-1 is composed of 14 different subunits. Subunits NuoA, H, J, K, L, M, N constitute the membrane sector of the complex. [4Fe-4S] cluster is required as a cofactor.

It is found in the cell inner membrane. It carries out the reaction a quinone + NADH + 5 H(+)(in) = a quinol + NAD(+) + 4 H(+)(out). NDH-1 shuttles electrons from NADH, via FMN and iron-sulfur (Fe-S) centers, to quinones in the respiratory chain. The immediate electron acceptor for the enzyme in this species is believed to be ubiquinone. Couples the redox reaction to proton translocation (for every two electrons transferred, four hydrogen ions are translocated across the cytoplasmic membrane), and thus conserves the redox energy in a proton gradient. The protein is NADH-quinone oxidoreductase subunit I of Xanthomonas oryzae pv. oryzae (strain KACC10331 / KXO85).